Here is a 133-residue protein sequence, read N- to C-terminus: Ubiquitin-like FUBI-ribosomal protein eS30 fusion protein (133 aa).

Residues 1 to 74 (MQLFVRAQEL…LEVAGRMLGG (74 aa)) form the Ubiquitin-like domain. Residues 84 to 110 (GKVRGQTPKVAKQEKKKKKTGRAKRRM) are disordered. Residues 97–110 (EKKKKKTGRAKRRM) show a composition bias toward basic residues. Lysine 125 is subject to N6-succinyllysine.

The protein in the N-terminal section; belongs to the ubiquitin family. It in the C-terminal section; belongs to the eukaryotic ribosomal protein eS30 family. Component of the 40S subunit of the ribosome. In terms of processing, FUBI is cleaved from ribosomal protein S30 by the deubiquitinase USP36 before the assembly of ribosomal protein S30 into pre-40S ribosomal particles. FUBI removal from ribosomal protein S30 is a crucial event for the final maturation of pre-40S particles.

Its subcellular location is the cytoplasm. It localises to the nucleus. Its function is as follows. May have pro-apoptotic activity. Functionally, component of the 40S subunit of the ribosome. Contributes to the assembly and function of 40S ribosomal subunits. This chain is Ubiquitin-like FUBI-ribosomal protein eS30 fusion protein, found in Homo sapiens (Human).